The sequence spans 165 residues: Small ribosomal subunit protein uS5 (165 aa).

One can recognise an S5 DRBM domain in the interval 10-73 (LKEKVVHINR…EDAKKNIVEV (64 aa)).

Belongs to the universal ribosomal protein uS5 family. In terms of assembly, part of the 30S ribosomal subunit. Contacts proteins S4 and S8.

Its function is as follows. With S4 and S12 plays an important role in translational accuracy. In terms of biological role, located at the back of the 30S subunit body where it stabilizes the conformation of the head with respect to the body. The polypeptide is Small ribosomal subunit protein uS5 (Clostridium botulinum (strain ATCC 19397 / Type A)).